The chain runs to 282 residues: WRKY transcription factor 71 (282 aa).

Residues 63–121 (LTSNSPVVSSSSNEGEPKENTNDKSDQMEDNEGDLHGVGESSKQLTKQGKKKGEKKERE) form a disordered region. Over residues 65-75 (SNSPVVSSSSN) the composition is skewed to low complexity. A compositionally biased stretch (basic and acidic residues) spans 77 to 99 (GEPKENTNDKSDQMEDNEGDLHG). Positions 130–195 (SEIDHLEDGY…YEGKHNHPIP (66 aa)) form a DNA-binding region, WRKY.

Belongs to the WRKY group II-c family.

It is found in the nucleus. Its function is as follows. Transcription factor. Interacts specifically with the W box (5'-(T)TGAC[CT]-3'), a frequently occurring elicitor-responsive cis-acting element. This Arabidopsis thaliana (Mouse-ear cress) protein is WRKY transcription factor 71 (WRKY71).